Consider the following 97-residue polypeptide: U-reduvitoxin-Pr11a (97 aa).

A signal peptide spans 1–20 (MKTALFLVFALAFIAVEGKM). Pacifastin domains lie at 22-59 (RACSKPGQTVLAPDGCNHCRCSEKGILMACTKMMCPPR) and 62-97 (EKSCKPGTTFKHKDGCNTCKCSDDGKNALCTSKLCL). Disulfide bonds link cysteine 24–cysteine 42, cysteine 37–cysteine 56, and cysteine 40–cysteine 51. The segment at 57-59 (PPR) is pro-Pro-Arg motif necessary for proteolytic processing. 3 cysteine pairs are disulfide-bonded: cysteine 65/cysteine 82, cysteine 77/cysteine 96, and cysteine 80/cysteine 91.

The protein belongs to the protease inhibitor I19 family. Expressed by the venom gland.

It is found in the secreted. Its function is as follows. Inhibits trypsin activity and prophenoloxidase (PPO) activation, an enzyme essential for both clotting and insect innate immune responses. It does not inhibit activity of chymotrypsin and protease K, and has no effect on phenoloxidase (PO) activity. This Platymeris rhadamanthus (Red spot assassin bug) protein is U-reduvitoxin-Pr11a.